We begin with the raw amino-acid sequence, 346 residues long: Cobalt transport protein CbiM (346 aa).

An N-terminal signal peptide occupies residues 1 to 25 (MKRITLYAAGSAIIGAMLLAGPAHA). Transmembrane regions (helical) follow at residues 31 to 51 (GILP…FLAL), 68 to 88 (PLVG…IPVP), 101 to 121 (IAAI…ALLI), 133 to 153 (TLGA…WFVF), 159 to 179 (LGAG…WATY), 196 to 216 (FYPL…PLGV), 255 to 275 (ATVV…AGPS), and 312 to 332 (LLLF…GYFW).

This sequence belongs to the CbiM family. As to quaternary structure, forms an energy-coupling factor (ECF) transporter complex composed of an ATP-binding protein (A component, CbiO), a transmembrane protein (T component, CbiQ) and 2 possible substrate-capture proteins (S components, CbiM and CbiN) of unknown stoichimetry.

The protein localises to the cell inner membrane. It participates in cofactor biosynthesis; adenosylcobalamin biosynthesis. Its function is as follows. Part of the energy-coupling factor (ECF) transporter complex CbiMNOQ involved in cobalt import. The polypeptide is Cobalt transport protein CbiM (Geobacter sulfurreducens (strain ATCC 51573 / DSM 12127 / PCA)).